The following is a 431-amino-acid chain: 3-phosphoshikimate 1-carboxyvinyltransferase (431 aa).

3-phosphoshikimate-binding residues include K26, S27, and R31. Position 26 (K26) interacts with phosphoenolpyruvate. Phosphoenolpyruvate is bound by residues G99 and R127. 3-phosphoshikimate is bound by residues S170, S171, Q172, S199, E314, and H343. Residue Q172 participates in phosphoenolpyruvate binding. E314 acts as the Proton acceptor in catalysis. Phosphoenolpyruvate contacts are provided by R347, R388, and K413.

This sequence belongs to the EPSP synthase family. Monomer.

It is found in the cytoplasm. The catalysed reaction is 3-phosphoshikimate + phosphoenolpyruvate = 5-O-(1-carboxyvinyl)-3-phosphoshikimate + phosphate. The protein operates within metabolic intermediate biosynthesis; chorismate biosynthesis; chorismate from D-erythrose 4-phosphate and phosphoenolpyruvate: step 6/7. Its function is as follows. Catalyzes the transfer of the enolpyruvyl moiety of phosphoenolpyruvate (PEP) to the 5-hydroxyl of shikimate-3-phosphate (S3P) to produce enolpyruvyl shikimate-3-phosphate and inorganic phosphate. The chain is 3-phosphoshikimate 1-carboxyvinyltransferase from Mycobacterium ulcerans (strain Agy99).